The chain runs to 296 residues: Ribosomal RNA small subunit methyltransferase H (296 aa).

S-adenosyl-L-methionine-binding positions include 30–32, Asp49, Phe77, Asp95, and Gln102; that span reads GGH.

The protein belongs to the methyltransferase superfamily. RsmH family.

It is found in the cytoplasm. It carries out the reaction cytidine(1402) in 16S rRNA + S-adenosyl-L-methionine = N(4)-methylcytidine(1402) in 16S rRNA + S-adenosyl-L-homocysteine + H(+). Functionally, specifically methylates the N4 position of cytidine in position 1402 (C1402) of 16S rRNA. The chain is Ribosomal RNA small subunit methyltransferase H from Hydrogenobaculum sp. (strain Y04AAS1).